The primary structure comprises 318 residues: MSVVVYAPASIGNVSVGFDVLGAAVSPIDGSLLGDRVEVAAGEQPFTLKCVGDFVAKLPVEQEENIVYHCWLVFARELDKKNIELKPVSMTLEKNMPIGSGLGSSACSVVAALDALNRFHNLPLNEVELLALMGEMEAKISGSLHYDNVAPCYLGGLQFMVQELGIISQPVPCFDDWYWVMAYPGIKVPTAEARAILPSQYRRQDVIAHGRYLGGFIHACHSQQPELAAKMVKDVVAEPYRERLLPGFSNARQYALEAGALASGISGSGPTMFSVCNDLEVAKRIARWLEDNYVQNDEGFVHVCRLDSTGSKVTGSEL.

Pro-97 to Cys-107 contributes to the ATP binding site.

The protein belongs to the GHMP kinase family. Homoserine kinase subfamily.

The protein localises to the cytoplasm. It carries out the reaction L-homoserine + ATP = O-phospho-L-homoserine + ADP + H(+). It functions in the pathway amino-acid biosynthesis; L-threonine biosynthesis; L-threonine from L-aspartate: step 4/5. In terms of biological role, catalyzes the ATP-dependent phosphorylation of L-homoserine to L-homoserine phosphate. The chain is Homoserine kinase from Photobacterium profundum (strain SS9).